The chain runs to 266 residues: Dihydropteroate synthase (266 aa).

One can recognise a Pterin-binding domain in the interval 12 to 260; the sequence is AAIMGILNVT…DVKANQDIVA (249 aa). Asn19 lines the Mg(2+) pocket. (7,8-dihydropterin-6-yl)methyl diphosphate is bound by residues Thr59, Asp93, Asn112, Asp176, Lys212, and 248–250; that span reads RVH.

Belongs to the DHPS family. As to quaternary structure, homodimer or homotrimer. It depends on Mg(2+) as a cofactor.

It catalyses the reaction (7,8-dihydropterin-6-yl)methyl diphosphate + 4-aminobenzoate = 7,8-dihydropteroate + diphosphate. It participates in cofactor biosynthesis; tetrahydrofolate biosynthesis; 7,8-dihydrofolate from 2-amino-4-hydroxy-6-hydroxymethyl-7,8-dihydropteridine diphosphate and 4-aminobenzoate: step 1/2. Catalyzes the condensation of para-aminobenzoate (pABA) with 6-hydroxymethyl-7,8-dihydropterin diphosphate (DHPt-PP) to form 7,8-dihydropteroate (H2Pte), the immediate precursor of folate derivatives. The protein is Dihydropteroate synthase (folP) of Streptococcus pyogenes serotype M1.